The sequence spans 342 residues: tRNA N6-adenosine threonylcarbamoyltransferase (342 aa).

The Fe cation site is built by H111 and H115. Residues 134-138 (LVSGG), D167, G180, and N274 each bind substrate. A Fe cation-binding site is contributed by D302.

The protein belongs to the KAE1 / TsaD family. The cofactor is Fe(2+).

The protein resides in the cytoplasm. It carries out the reaction L-threonylcarbamoyladenylate + adenosine(37) in tRNA = N(6)-L-threonylcarbamoyladenosine(37) in tRNA + AMP + H(+). Its function is as follows. Required for the formation of a threonylcarbamoyl group on adenosine at position 37 (t(6)A37) in tRNAs that read codons beginning with adenine. Is involved in the transfer of the threonylcarbamoyl moiety of threonylcarbamoyl-AMP (TC-AMP) to the N6 group of A37, together with TsaE and TsaB. TsaD likely plays a direct catalytic role in this reaction. This is tRNA N6-adenosine threonylcarbamoyltransferase from Herminiimonas arsenicoxydans.